Consider the following 377-residue polypeptide: tRNA(Met) cytidine acetate ligase (377 aa).

Residues 7–20 (VTEY…HLYH), Gly-100, Asn-153, and Arg-178 contribute to the ATP site.

The protein belongs to the TmcAL family.

The protein resides in the cytoplasm. It catalyses the reaction cytidine(34) in elongator tRNA(Met) + acetate + ATP = N(4)-acetylcytidine(34) in elongator tRNA(Met) + AMP + diphosphate. Functionally, catalyzes the formation of N(4)-acetylcytidine (ac(4)C) at the wobble position of elongator tRNA(Met), using acetate and ATP as substrates. First activates an acetate ion to form acetyladenylate (Ac-AMP) and then transfers the acetyl group to tRNA to form ac(4)C34. This chain is tRNA(Met) cytidine acetate ligase, found in Staphylococcus saprophyticus subsp. saprophyticus (strain ATCC 15305 / DSM 20229 / NCIMB 8711 / NCTC 7292 / S-41).